The chain runs to 417 residues: Mitochondrial tRNA-specific 2-thiouridylase 1 (417 aa).

ATP is bound by residues A32 to S39 and M58. Residues N122–D124 are interaction with target base in tRNA. C127 (nucleophile) is an active-site residue. The cysteines at positions 127 and 229 are disulfide-linked. Position 154 (G154) interacts with ATP. An interaction with tRNA region spans residues K179–Q181. Catalysis depends on C229, which acts as the Cysteine persulfide intermediate. An interaction with tRNA region spans residues R354–S355.

This sequence belongs to the MnmA/TRMU family.

It is found in the mitochondrion. The catalysed reaction is 5-taurinomethyluridine(34) in tRNA + S-sulfanyl-L-cysteinyl-[protein] + AH2 + ATP = 5-taurinomethyl-2-thiouridine(34) in tRNA + L-cysteinyl-[protein] + A + AMP + diphosphate + H(+). Functionally, catalyzes the 2-thiolation of uridine at the wobble position (U34) of mitochondrial tRNA(Lys), tRNA(Glu) and tRNA(Gln). Required for the formation of 5-taurinomethyl-2-thiouridine (tm5s2U) of mitochondrial tRNA(Lys), tRNA(Glu), and tRNA(Gln) at the wobble position. ATP is required to activate the C2 atom of the wobble base. This is Mitochondrial tRNA-specific 2-thiouridylase 1 (SLM3) from Saccharomyces cerevisiae (strain ATCC 204508 / S288c) (Baker's yeast).